Reading from the N-terminus, the 1747-residue chain is Retroelement silencing factor 1 (1747 aa).

A Glycyl lysine isopeptide (Lys-Gly) (interchain with G-Cter in SUMO2) cross-link involves residue Lys216. Residue Ser221 is modified to Phosphoserine. The span at 261 to 272 (TSAVPSQQYATQ) shows a compositional bias: polar residues. The tract at residues 261 to 280 (TSAVPSQQYATQTDKRPPPP) is disordered. Lys707 is covalently cross-linked (Glycyl lysine isopeptide (Lys-Gly) (interchain with G-Cter in SUMO2)). 3 disordered regions span residues 833–856 (PLTQ…NVNQ), 923–956 (PQKP…GFQK), and 1073–1101 (EGSV…KDPA). Over residues 842–856 (ESTNGNSEVTPNVNQ) the composition is skewed to polar residues. Over residues 937–956 (REPEKQLDNTTENKDFGFQK) the composition is skewed to basic and acidic residues. Residues 1073–1087 (EGSVGQQTTYQTSED) show a composition bias toward polar residues. The segment covering 1089 to 1101 (TADKTSSDSKDPA) has biased composition (basic and acidic residues). A Glycyl lysine isopeptide (Lys-Gly) (interchain with G-Cter in SUMO2) cross-link involves residue Lys1136. Ser1145 is subject to Phosphoserine. The segment at 1200-1274 (EEKQKEQCSP…KSLPRTEQEL (75 aa)) is disordered. Over residues 1217 to 1226 (QGERTSDRDV) the composition is skewed to basic and acidic residues. Phosphothreonine is present on Thr1240. The segment covering 1242–1261 (PDGKSHFPELQDDSRKDTPK) has biased composition (basic and acidic residues). Ser1358 bears the Phosphoserine mark. Residues Lys1528 and Lys1636 each participate in a glycyl lysine isopeptide (Lys-Gly) (interchain with G-Cter in SUMO2) cross-link. Residues 1686-1716 (KRTQKDSQERDNVNSRLSKRSFSADGFEMLQ) form a disordered region. Positions 1689–1698 (QKDSQERDNV) are enriched in basic and acidic residues. Ser1708 carries the phosphoserine modification. A Glycyl lysine isopeptide (Lys-Gly) (interchain with G-Cter in SUMO2) cross-link involves residue Lys1723. The residue at position 1740 (Ser1740) is a Phosphoserine.

Interacts with SETDB1.

It localises to the nucleus. In terms of biological role, plays a role in the regulation of imprinted gene expression, regulates repressive epigenetic modifications associated with SETDB1. Required for the recruitment or accumulation of SETDB1 to the endogenous retroviruses (ERVs) and maintenance of repressive chromatin configuration, contributing to a subset of the SETDB1-dependent ERV silencing in embryonic stem cells. This is Retroelement silencing factor 1 from Homo sapiens (Human).